A 204-amino-acid polypeptide reads, in one-letter code: Cell wall protein RHD3 (204 aa).

The N-terminal stretch at 1 to 15 (MKFLAILSLSSSALA) is a signal peptide. Residue Gly182 is the site of GPI-anchor amidated glycine attachment. The propeptide at 183–204 (AAGQNKLSYGVGMAAVVAGLVM) is removed in mature form.

Belongs to the SRP1/TIP1 family. Post-translationally, the GPI-anchor is attached to the protein in the endoplasmic reticulum and serves to target the protein to the cell surface. There, the glucosamine-inositol phospholipid moiety is cleaved off and the GPI-modified mannoprotein is covalently attached via its lipidless GPI glycan remnant to the 1,6-beta-glucan of the outer cell wall layer. In terms of processing, O-glycosylated by PMT1.

The protein localises to the secreted. The protein resides in the cell wall. It is found in the membrane. Functionally, component of the cell wall involved in virulence. Does not seem to have a major role in maintaining cell wall integrity but plays a role in the relationship between C.albicans and the host. This Candida albicans (strain SC5314 / ATCC MYA-2876) (Yeast) protein is Cell wall protein RHD3 (RHD3).